Reading from the N-terminus, the 137-residue chain is Glutamate mutase sigma subunit (137 aa).

A B12-binding domain is found at 3 to 137 (EVNLVLGVIG…KALKEDLGLM (135 aa)). Adenosylcob(III)alamin contacts are provided by residues 13-17 (ADVHA), H16, 61-63 (SSL), and 93-97 (NLVVG).

It belongs to the methylaspartate mutase GlmS subunit family. Heterotetramer composed of 2 epsilon subunits (GlmE) and 2 sigma subunits (GlmS). GlmE exists as a homodimer and GlmS as a monomer. The cofactor is adenosylcob(III)alamin.

It catalyses the reaction (2S,3S)-3-methyl-L-aspartate = L-glutamate. Its pathway is amino-acid degradation; L-glutamate degradation via mesaconate pathway; acetate and pyruvate from L-glutamate: step 1/4. Its function is as follows. Catalyzes the carbon skeleton rearrangement of L-glutamate to L-threo-3-methylaspartate ((2S,3S)-3-methylaspartate). The protein is Glutamate mutase sigma subunit of Carboxydothermus hydrogenoformans (strain ATCC BAA-161 / DSM 6008 / Z-2901).